The chain runs to 382 residues: Chorismate synthase (382 aa).

2 residues coordinate NADP(+): Arg39 and Arg45. Residues Arg127–Ser129, Gln245–Ala246, Gly290, Lys305–Thr309, and Arg331 each bind FMN.

This sequence belongs to the chorismate synthase family. Homotetramer. It depends on FMNH2 as a cofactor.

The enzyme catalyses 5-O-(1-carboxyvinyl)-3-phosphoshikimate = chorismate + phosphate. The protein operates within metabolic intermediate biosynthesis; chorismate biosynthesis; chorismate from D-erythrose 4-phosphate and phosphoenolpyruvate: step 7/7. Catalyzes the anti-1,4-elimination of the C-3 phosphate and the C-6 proR hydrogen from 5-enolpyruvylshikimate-3-phosphate (EPSP) to yield chorismate, which is the branch point compound that serves as the starting substrate for the three terminal pathways of aromatic amino acid biosynthesis. This reaction introduces a second double bond into the aromatic ring system. In Desulfitobacterium hafniense (strain Y51), this protein is Chorismate synthase.